The primary structure comprises 335 residues: tRNA N6-adenosine threonylcarbamoyltransferase (335 aa).

The Fe cation site is built by His111 and His115. Substrate contacts are provided by residues 133–137 (LISGG), Asp166, Gly179, and Asn276. Asp301 serves as a coordination point for Fe cation.

The protein belongs to the KAE1 / TsaD family. Fe(2+) is required as a cofactor.

The protein localises to the cytoplasm. The catalysed reaction is L-threonylcarbamoyladenylate + adenosine(37) in tRNA = N(6)-L-threonylcarbamoyladenosine(37) in tRNA + AMP + H(+). In terms of biological role, required for the formation of a threonylcarbamoyl group on adenosine at position 37 (t(6)A37) in tRNAs that read codons beginning with adenine. Is involved in the transfer of the threonylcarbamoyl moiety of threonylcarbamoyl-AMP (TC-AMP) to the N6 group of A37, together with TsaE and TsaB. TsaD likely plays a direct catalytic role in this reaction. In Wolbachia sp. subsp. Drosophila simulans (strain wRi), this protein is tRNA N6-adenosine threonylcarbamoyltransferase.